Here is a 400-residue protein sequence, read N- to C-terminus: Multiphosphoryl transfer protein (400 aa).

The PTS EIIA type-2 domain maps to 2-142; the sequence is LELTTQDIQL…QQIIAIIKGE (141 aa). Catalysis depends on histidine 62, which acts as the Tele-phosphohistidine intermediate; for EIIA activity. Histidine 62 is modified (phosphohistidine; by HPr). The HPr domain maps to 310–400; sequence AHTATFRIKN…VAINAGLGEG (91 aa). Catalysis depends on histidine 324, which acts as the Pros-phosphohistidine intermediate; for HPr activity. Residue histidine 324 is modified to Phosphohistidine; by EI.

The protein localises to the cytoplasm. In terms of biological role, the phosphoenolpyruvate-dependent sugar phosphotransferase system (sugar PTS), a major carbohydrate active transport system, catalyzes the phosphorylation of incoming sugar substrates concomitantly with their translocation across the cell membrane. The enzyme II FruAB PTS system is involved in fructose transport. This chain is Multiphosphoryl transfer protein, found in Vibrio cholerae serotype O1 (strain ATCC 39315 / El Tor Inaba N16961).